The primary structure comprises 324 residues: Mevalonate kinase (324 aa).

Residue 103–113 (PPRAGLGSSAA) participates in ATP binding. D154 functions as the Proton acceptor in the catalytic mechanism.

Belongs to the GHMP kinase family. Mevalonate kinase subfamily. As to quaternary structure, homodimer. It depends on Mg(2+) as a cofactor.

The protein localises to the cytoplasm. The catalysed reaction is (R)-mevalonate + ATP = (R)-5-phosphomevalonate + ADP + H(+). It functions in the pathway isoprenoid biosynthesis; isopentenyl diphosphate biosynthesis via mevalonate pathway; isopentenyl diphosphate from (R)-mevalonate: step 1/3. Its function is as follows. Catalyzes the phosphorylation of (R)-mevalonate (MVA) to (R)-mevalonate 5-phosphate (MVAP). Functions in the mevalonate (MVA) pathway leading to isopentenyl diphosphate (IPP), a key precursor for the biosynthesis of isoprenoid compounds such as archaeal membrane lipids. The protein is Mevalonate kinase of Aeropyrum pernix (strain ATCC 700893 / DSM 11879 / JCM 9820 / NBRC 100138 / K1).